A 110-amino-acid chain; its full sequence is Large ribosomal subunit protein uL24 (110 aa).

The protein belongs to the universal ribosomal protein uL24 family. In terms of assembly, part of the 50S ribosomal subunit.

In terms of biological role, one of two assembly initiator proteins, it binds directly to the 5'-end of the 23S rRNA, where it nucleates assembly of the 50S subunit. Functionally, one of the proteins that surrounds the polypeptide exit tunnel on the outside of the subunit. In Frankia alni (strain DSM 45986 / CECT 9034 / ACN14a), this protein is Large ribosomal subunit protein uL24.